A 353-amino-acid chain; its full sequence is Photosystem II D2 protein (353 aa).

N-acetylthreonine is present on T2. The residue at position 2 (T2) is a Phosphothreonine. The helical transmembrane segment at C41–T61 threads the bilayer. Position 118 (H118) interacts with chlorophyll a. A helical transmembrane segment spans residues G125–P141. The pheophytin a site is built by Q130 and N143. A helical membrane pass occupies residues V153 to S166. H198 contributes to the chlorophyll a binding site. A helical membrane pass occupies residues A208–D228. Residues H215 and F262 each contribute to the a plastoquinone site. Position 215 (H215) interacts with Fe cation. H269 lines the Fe cation pocket. Residues G279–R295 form a helical membrane-spanning segment.

Belongs to the reaction center PufL/M/PsbA/D family. In terms of assembly, PSII is composed of 1 copy each of membrane proteins PsbA, PsbB, PsbC, PsbD, PsbE, PsbF, PsbH, PsbI, PsbJ, PsbK, PsbL, PsbM, PsbT, PsbX, PsbY, PsbZ, Psb30/Ycf12, at least 3 peripheral proteins of the oxygen-evolving complex and a large number of cofactors. It forms dimeric complexes. The D1/D2 heterodimer binds P680, chlorophylls that are the primary electron donor of PSII, and subsequent electron acceptors. It shares a non-heme iron and each subunit binds pheophytin, quinone, additional chlorophylls, carotenoids and lipids. There is also a Cl(-1) ion associated with D1 and D2, which is required for oxygen evolution. The PSII complex binds additional chlorophylls, carotenoids and specific lipids. is required as a cofactor.

Its subcellular location is the plastid. It localises to the chloroplast thylakoid membrane. It carries out the reaction 2 a plastoquinone + 4 hnu + 2 H2O = 2 a plastoquinol + O2. In terms of biological role, photosystem II (PSII) is a light-driven water:plastoquinone oxidoreductase that uses light energy to abstract electrons from H(2)O, generating O(2) and a proton gradient subsequently used for ATP formation. It consists of a core antenna complex that captures photons, and an electron transfer chain that converts photonic excitation into a charge separation. The D1/D2 (PsbA/PsbD) reaction center heterodimer binds P680, the primary electron donor of PSII as well as several subsequent electron acceptors. D2 is needed for assembly of a stable PSII complex. The protein is Photosystem II D2 protein of Chara vulgaris (Common stonewort).